A 148-amino-acid chain; its full sequence is Ubiquitin-conjugating enzyme E2 4 (148 aa).

The interval 1–22 (MSSSKRIAKELSDLERDPPTSC) is disordered. The UBC core domain occupies 2–148 (SSSKRIAKEL…AREWTKKYAV (147 aa)). Residues 7–18 (IAKELSDLERDP) show a composition bias toward basic and acidic residues. Position 12 is a phosphoserine (Ser12). Residue Cys86 is the Glycyl thioester intermediate of the active site. A Glycyl lysine isopeptide (Lys-Gly) (interchain with G-Cter in ubiquitin) cross-link involves residue Lys91.

This sequence belongs to the ubiquitin-conjugating enzyme family. In terms of assembly, interacts with TUL1. In terms of processing, the N-terminus is blocked.

The catalysed reaction is S-ubiquitinyl-[E1 ubiquitin-activating enzyme]-L-cysteine + [E2 ubiquitin-conjugating enzyme]-L-cysteine = [E1 ubiquitin-activating enzyme]-L-cysteine + S-ubiquitinyl-[E2 ubiquitin-conjugating enzyme]-L-cysteine.. It functions in the pathway protein modification; protein ubiquitination. E2 ubiquitin-conjugating enzyme that catalyzes the covalent attachment of ubiquitin to other proteins. Mediates the selective degradation of short-lived and abnormal proteins. Mediates ubiquitination of PEX5. The sequence is that of Ubiquitin-conjugating enzyme E2 4 from Saccharomyces cerevisiae (strain ATCC 204508 / S288c) (Baker's yeast).